The chain runs to 271 residues: MVKISFQPAVAGIKGDKADKASASASASAPAPTPAAEILLTPAREERPPYQRYKKGGSVGGVCYLSMGMVVLLMGLVFASVYIYRYFFLAQLARDNFFHCGVLYEDSLSSQAHTRMELEEDVKIYLEENYERINVPVPQFGGGDPADIIHDFQRGLTAYHDISLDKCYVIELNTTIVLPPRNFWELLMNVKRGTYLPQTYIIQEEMVVTEHVSDKEALGSFIYHLCSGKDTYRLRRRATRRRINKREAKNCNAIRHFENTFVVETLICGVV.

At T41 the chain carries Phosphothreonine. The helical; Signal-anchor for type II membrane protein transmembrane segment at 59–79 (VGGVCYLSMGMVVLLMGLVFA) threads the bilayer. The BRICHOS domain occupies 140–234 (FGGGDPADII…LCSGKDTYRL (95 aa)). A disulfide bridge connects residues C167 and C226. N173 carries N-linked (GlcNAc...) asparagine glycosylation.

This sequence belongs to the ITM2 family. As to quaternary structure, interacts with BACE1. Interacts with APP. Interacts with STMN2. In terms of processing, type I membrane-bound, as well as soluble, furin has a pre-eminent role in ITM2C proteolytic processing. PCSK7 and PCSK5 may also be involved although to a lesser extent. The soluble form of PCSK7 is incapable of processing ITM2C. Fails to undergo shedding by ADAM10 and intramembrane cleavage by SPPL2B.

The protein resides in the lysosome membrane. It is found in the cell membrane. Its function is as follows. Negative regulator of amyloid-beta peptide production. May inhibit the processing of APP by blocking its access to alpha- and beta-secretase. Binding to the beta-secretase-cleaved APP C-terminal fragment is negligible, suggesting that ITM2C is a poor gamma-secretase cleavage inhibitor. May play a role in TNF-induced cell death and neuronal differentiation. This is Integral membrane protein 2C (ITM2C) from Bos taurus (Bovine).